The chain runs to 271 residues: Tryptophan synthase alpha chain (271 aa).

Catalysis depends on proton acceptor residues E49 and D60.

Belongs to the TrpA family. As to quaternary structure, tetramer of two alpha and two beta chains.

The enzyme catalyses (1S,2R)-1-C-(indol-3-yl)glycerol 3-phosphate + L-serine = D-glyceraldehyde 3-phosphate + L-tryptophan + H2O. The protein operates within amino-acid biosynthesis; L-tryptophan biosynthesis; L-tryptophan from chorismate: step 5/5. Its function is as follows. The alpha subunit is responsible for the aldol cleavage of indoleglycerol phosphate to indole and glyceraldehyde 3-phosphate. The chain is Tryptophan synthase alpha chain from Aromatoleum aromaticum (strain DSM 19018 / LMG 30748 / EbN1) (Azoarcus sp. (strain EbN1)).